The following is a 258-amino-acid chain: L-aminoadipate-semialdehyde dehydrogenase-phosphopantetheinyl transferase (258 aa).

It belongs to the P-Pant transferase superfamily. AcpS family.

The catalysed reaction is apo-[ACP] + CoA = holo-[ACP] + adenosine 3',5'-bisphosphate + H(+). In terms of biological role, catalyzes the transfer of a 4'-phosphopantetheine moiety from coenzyme A to a serine residue of acceptor proteins, such as alpha-aminoadipate reductase. Necessary for alpha-aminoadipate reductase activity. The chain is L-aminoadipate-semialdehyde dehydrogenase-phosphopantetheinyl transferase (LYS5) from Candida glabrata (strain ATCC 2001 / BCRC 20586 / JCM 3761 / NBRC 0622 / NRRL Y-65 / CBS 138) (Yeast).